The chain runs to 344 residues: Tetraacyldisaccharide 4'-kinase (344 aa).

65–72 (HAGGTGKT) provides a ligand contact to ATP.

The protein belongs to the LpxK family.

It catalyses the reaction a lipid A disaccharide + ATP = a lipid IVA + ADP + H(+). The protein operates within glycolipid biosynthesis; lipid IV(A) biosynthesis; lipid IV(A) from (3R)-3-hydroxytetradecanoyl-[acyl-carrier-protein] and UDP-N-acetyl-alpha-D-glucosamine: step 6/6. Functionally, transfers the gamma-phosphate of ATP to the 4'-position of a tetraacyldisaccharide 1-phosphate intermediate (termed DS-1-P) to form tetraacyldisaccharide 1,4'-bis-phosphate (lipid IVA). This is Tetraacyldisaccharide 4'-kinase from Neisseria meningitidis serogroup A / serotype 4A (strain DSM 15465 / Z2491).